The chain runs to 241 residues: MQLIPAIDLLGGQAVRLHQGRYDQVTVYDQDPAALAARLRRACARLHVVDLEGARAGLPVQADAVRAVIAAFGAEGGSVQVGGGIRSAAAAESYLALGADRIVLGTAAVNDPALVRDLAGRFPGRVVVAVDAKDGRVAVQGWEQVSSVTALDVARALAGAPVAALLYTDVSRDGTQVGPNLEATRELAASCGFPVLASGGVGSLAHLRALAQIPGVSGVIVGRALYEGAFTLAEAIEAASA.

The active-site Proton acceptor is D8. The Proton donor role is filled by D131.

This sequence belongs to the HisA/HisF family.

The protein resides in the cytoplasm. The catalysed reaction is 1-(5-phospho-beta-D-ribosyl)-5-[(5-phospho-beta-D-ribosylamino)methylideneamino]imidazole-4-carboxamide = 5-[(5-phospho-1-deoxy-D-ribulos-1-ylimino)methylamino]-1-(5-phospho-beta-D-ribosyl)imidazole-4-carboxamide. It functions in the pathway amino-acid biosynthesis; L-histidine biosynthesis; L-histidine from 5-phospho-alpha-D-ribose 1-diphosphate: step 4/9. The sequence is that of 1-(5-phosphoribosyl)-5-[(5-phosphoribosylamino)methylideneamino] imidazole-4-carboxamide isomerase from Sorangium cellulosum (strain So ce56) (Polyangium cellulosum (strain So ce56)).